The chain runs to 306 residues: GTPase Era (306 aa).

Positions 14 to 181 constitute an Era-type G domain; that stretch reads KSGFIGIIGR…LDELWKYLPE (168 aa). Residues 22–29 form a G1 region; it reads GRPNVGKS. GTP is bound at residue 22 to 29; sequence GRPNVGKS. Residues 48 to 52 are G2; it reads QTTRN. A G3 region spans residues 69-72; that stretch reads DTPG. Residues 69–73 and 131–134 contribute to the GTP site; these read DTPGI and NKID. A G4 region spans residues 131–134; that stretch reads NKID. The segment at 160-162 is G5; that stretch reads ISA. Residues 212 to 290 enclose the KH type-2 domain; it reads THKEIPYSSA…FLELFVRVRK (79 aa).

It belongs to the TRAFAC class TrmE-Era-EngA-EngB-Septin-like GTPase superfamily. Era GTPase family. Monomer.

The protein resides in the cytoplasm. The protein localises to the cell inner membrane. An essential GTPase that binds both GDP and GTP, with rapid nucleotide exchange. Plays a role in 16S rRNA processing and 30S ribosomal subunit biogenesis and possibly also in cell cycle regulation and energy metabolism. The sequence is that of GTPase Era from Syntrophus aciditrophicus (strain SB).